The following is a 264-amino-acid chain: PDZ domain-containing protein 9 (264 aa).

The region spanning 30-109 (QTKLTVGSLG…GTVLQIKVYR (80 aa)) is the PDZ domain.

This Homo sapiens (Human) protein is PDZ domain-containing protein 9 (PDZD9).